The sequence spans 315 residues: Probable NAD(P)H-dependent D-xylose reductase xyl1 (315 aa).

The active-site Proton donor is the Tyr-50. His-112 provides a ligand contact to substrate. Residues 166 to 167 (SN), 215 to 224 (SSFGPLSFVE), and 271 to 281 (KSNDPTRLAQN) each bind NAD(+).

This sequence belongs to the aldo/keto reductase family.

It catalyses the reaction xylitol + NAD(+) = D-xylose + NADH + H(+). The catalysed reaction is xylitol + NADP(+) = D-xylose + NADPH + H(+). The protein operates within carbohydrate metabolism; D-xylose degradation. Functionally, catalyzes the initial reaction in the xylose utilization pathway by reducing D-xylose into xylitol. Xylose is a major component of hemicelluloses such as xylan. Most fungi utilize D-xylose via three enzymatic reactions, xylose reductase (XR), xylitol dehydrogenase (XDH), and xylulokinase, to form xylulose 5-phosphate, which enters pentose phosphate pathway. The chain is Probable NAD(P)H-dependent D-xylose reductase xyl1 (xyl1) from Aspergillus fumigatus (strain ATCC MYA-4609 / CBS 101355 / FGSC A1100 / Af293) (Neosartorya fumigata).